The chain runs to 199 residues: Recombination protein RecR (199 aa).

The segment at 58-73 (CSTCNNLTDKDPCTIC) adopts a C4-type zinc-finger fold. Positions 81-176 (NLICVVQDAR…RVTRLAYGLP (96 aa)) constitute a Toprim domain.

Belongs to the RecR family.

Functionally, may play a role in DNA repair. It seems to be involved in an RecBC-independent recombinational process of DNA repair. It may act with RecF and RecO. In Natranaerobius thermophilus (strain ATCC BAA-1301 / DSM 18059 / JW/NM-WN-LF), this protein is Recombination protein RecR.